The primary structure comprises 183 residues: Inner membrane-spanning protein YciB (183 aa).

The next 5 membrane-spanning stretches (helical) occupy residues 19–39 (LYGV…QLIV), 53–73 (IMGI…DLNF), 76–96 (WKVT…QFVF), 121–141 (LGWA…SYYF), and 151–171 (TFGF…YLYP).

It belongs to the YciB family.

The protein resides in the cell inner membrane. Its function is as follows. Plays a role in cell envelope biogenesis, maintenance of cell envelope integrity and membrane homeostasis. The polypeptide is Inner membrane-spanning protein YciB (Actinobacillus pleuropneumoniae serotype 5b (strain L20)).